We begin with the raw amino-acid sequence, 222 residues long: Interleukin-12 subunit alpha (222 aa).

Residues 1–25 (MCPLRNLLLVATLVLLNHLDHLSLG) form the signal peptide. Cystine bridges form between cysteine 40/cysteine 113, cysteine 67/cysteine 199, and cysteine 88/cysteine 126. Asparagine 42 and asparagine 96 each carry an N-linked (GlcNAc...) asparagine glycan.

It belongs to the IL-6 superfamily. As to quaternary structure, heterodimer with IL12B; disulfide-linked. This heterodimer is known as interleukin IL-12. Heterodimer with EBI3/IL27B; not disulfide-linked. This heterodimer is known as interleukin IL-35. Interacts with NBR1; this interaction promotes IL-12 secretion.

The protein localises to the secreted. Heterodimerizes with IL12B to form the IL-12 cytokine or with EBI3/IL27B to form the IL-35 cytokine. IL-12 is primarily produced by professional antigen-presenting cells (APCs) such as B-cells and dendritic cells (DCs) as well as macrophages and granulocytes and regulates T-cell and natural killer-cell responses, induces the production of interferon-gamma (IFN-gamma), favors the differentiation of T-helper 1 (Th1) cells and is an important link between innate resistance and adaptive immunity. Mechanistically, exerts its biological effects through a receptor composed of IL12R1 and IL12R2 subunits. Binding to the receptor results in the rapid tyrosine phosphorylation of a number of cellular substrates including the JAK family kinases TYK2 and JAK2. In turn, recruited STAT4 gets phosphorylated and translocates to the nucleus where it regulates cytokine/growth factor responsive genes. As part of IL-35, plays essential roles in maintaining the immune homeostasis of the liver microenvironment and also functions as an immune-suppressive cytokine. Mediates biological events through unconventional receptors composed of IL12RB2 and gp130/IL6ST heterodimers or homodimers. Signaling requires the transcription factors STAT1 and STAT4, which form a unique heterodimer that binds to distinct DNA sites. The protein is Interleukin-12 subunit alpha (IL12A) of Sus scrofa (Pig).